The following is a 341-amino-acid chain: Phosphoribosylformylglycinamidine cyclo-ligase (341 aa).

This sequence belongs to the AIR synthase family.

The protein localises to the cytoplasm. The catalysed reaction is 2-formamido-N(1)-(5-O-phospho-beta-D-ribosyl)acetamidine + ATP = 5-amino-1-(5-phospho-beta-D-ribosyl)imidazole + ADP + phosphate + H(+). It functions in the pathway purine metabolism; IMP biosynthesis via de novo pathway; 5-amino-1-(5-phospho-D-ribosyl)imidazole from N(2)-formyl-N(1)-(5-phospho-D-ribosyl)glycinamide: step 2/2. The chain is Phosphoribosylformylglycinamidine cyclo-ligase from Synechocystis sp. (strain ATCC 27184 / PCC 6803 / Kazusa).